The chain runs to 499 residues: Centrosomal protein of 57 kDa (499 aa).

Residues 1-35 (MAAASVSETSASQFSNILAEPSKSNGSMVRHSSSP) are compositionally biased toward polar residues. Positions 1-58 (MAAASVSETSASQFSNILAEPSKSNGSMVRHSSSPYVVYPPDKPFLNSDLRRSPNKPT) are disordered. S53 bears the Phosphoserine mark. A centrosome localization domain (CLD) region spans residues 58-239 (TFAYPESNSR…KAAQLQTGLE (182 aa)). The stretch at 63–241 (ESNSRAIFSA…AQLQTGLEVN (179 aa)) forms a coiled coil. The mediates interaction with microtubules stretch occupies residues 277–490 (AVQPHYRLCL…KDMQSIQNSL (214 aa)). Disordered regions lie at residues 334-357 (KQVS…SVNE) and 431-476 (KQKK…SRKN). Low complexity predominate over residues 346–357 (SATPPSSSSVNE). Residues 389–450 (TVELKDNLEC…KTLDEEGNSS (62 aa)) adopt a coiled-coil conformation. Basic and acidic residues predominate over residues 431–444 (KQKKELKATRKTLD). The segment covering 449 to 459 (SSSRSTTTGTT) has biased composition (low complexity). Basic and acidic residues predominate over residues 460 to 474 (NKKDFAKPRPGEKSR).

This sequence belongs to the translokin family. Homodimer and homooligomer. Interacts with FGF2 and RAP80. Does not interact with FGF1 or FGF2 isoform 24 kDa. Interacts with microtubules.

The protein localises to the nucleus. It is found in the cytoplasm. It localises to the cytoskeleton. Its subcellular location is the microtubule organizing center. The protein resides in the centrosome. Centrosomal protein which may be required for microtubule attachment to centrosomes. May act by forming ring-like structures around microtubules. Mediates nuclear translocation and mitogenic activity of the internalized growth factor FGF2. The sequence is that of Centrosomal protein of 57 kDa (CEP57) from Bos taurus (Bovine).